The sequence spans 239 residues: MALLGVNVDHVATIRQARGTNEPDPVTAAALAELAGADGITIHLREDRRHIQDRDVELIRQTVKTRLNLEMAATDEMVGIALKVRPDAVTLVPEKRKELTTEGGLNVALLRQTLKKHIDLLKQGGISVSLFIDPDLEQVKASHRIGADAIEIHTGAYCDAACAATRSKELDKLTNAVKAGNKLGLLVHAGHGLTYFNIQPVAAIGGIREFNIGHSIISRAVLVGMDRAVREMKDLVGGA.

N7 is a binding site for 3-amino-2-oxopropyl phosphate. Position 9–10 (9–10) interacts with 1-deoxy-D-xylulose 5-phosphate; sequence DH. Residue R18 coordinates 3-amino-2-oxopropyl phosphate. Catalysis depends on H43, which acts as the Proton acceptor. 1-deoxy-D-xylulose 5-phosphate contacts are provided by R45 and H50. The Proton acceptor role is filled by E70. T100 lines the 1-deoxy-D-xylulose 5-phosphate pocket. The Proton donor role is filled by H191. 3-amino-2-oxopropyl phosphate-binding positions include G192 and 213–214; that span reads GH.

This sequence belongs to the PNP synthase family. In terms of assembly, homooctamer; tetramer of dimers.

It is found in the cytoplasm. It catalyses the reaction 3-amino-2-oxopropyl phosphate + 1-deoxy-D-xylulose 5-phosphate = pyridoxine 5'-phosphate + phosphate + 2 H2O + H(+). Its pathway is cofactor biosynthesis; pyridoxine 5'-phosphate biosynthesis; pyridoxine 5'-phosphate from D-erythrose 4-phosphate: step 5/5. In terms of biological role, catalyzes the complicated ring closure reaction between the two acyclic compounds 1-deoxy-D-xylulose-5-phosphate (DXP) and 3-amino-2-oxopropyl phosphate (1-amino-acetone-3-phosphate or AAP) to form pyridoxine 5'-phosphate (PNP) and inorganic phosphate. In Syntrophotalea carbinolica (strain DSM 2380 / NBRC 103641 / GraBd1) (Pelobacter carbinolicus), this protein is Pyridoxine 5'-phosphate synthase.